We begin with the raw amino-acid sequence, 141 residues long: Large ribosomal subunit protein uL16 (141 aa).

Belongs to the universal ribosomal protein uL16 family. In terms of assembly, part of the 50S ribosomal subunit.

Its function is as follows. Binds 23S rRNA and is also seen to make contacts with the A and possibly P site tRNAs. This chain is Large ribosomal subunit protein uL16, found in Sulfurimonas denitrificans (strain ATCC 33889 / DSM 1251) (Thiomicrospira denitrificans (strain ATCC 33889 / DSM 1251)).